The primary structure comprises 338 residues: GTPase Obg (338 aa).

Residues 1–159 form the Obg domain; that stretch reads MSFIDEVKIH…RWLRLELKLM (159 aa). Positions 160–331 constitute an OBG-type G domain; it reads ADVGLLGMPS…LLDEIARQLW (172 aa). GTP is bound by residues 166–173, 191–195, 213–216, 283–286, and 312–314; these read GMPSVGKS, FTTLK, DIPG, NKMD, and SAA. Ser-173 and Thr-193 together coordinate Mg(2+).

The protein belongs to the TRAFAC class OBG-HflX-like GTPase superfamily. OBG GTPase family. As to quaternary structure, monomer. Mg(2+) serves as cofactor.

The protein resides in the cytoplasm. An essential GTPase which binds GTP, GDP and possibly (p)ppGpp with moderate affinity, with high nucleotide exchange rates and a fairly low GTP hydrolysis rate. Plays a role in control of the cell cycle, stress response, ribosome biogenesis and in those bacteria that undergo differentiation, in morphogenesis control. This chain is GTPase Obg, found in Geotalea daltonii (strain DSM 22248 / JCM 15807 / FRC-32) (Geobacter daltonii).